A 139-amino-acid chain; its full sequence is Putative pre-16S rRNA nuclease (139 aa).

This sequence belongs to the YqgF nuclease family.

The protein resides in the cytoplasm. Functionally, could be a nuclease involved in processing of the 5'-end of pre-16S rRNA. This chain is Putative pre-16S rRNA nuclease, found in Streptococcus equi subsp. equi (strain 4047).